Here is a 476-residue protein sequence, read N- to C-terminus: Glycogen synthase (476 aa).

Lys15 serves as a coordination point for ADP-alpha-D-glucose.

Belongs to the glycosyltransferase 1 family. Bacterial/plant glycogen synthase subfamily.

The enzyme catalyses [(1-&gt;4)-alpha-D-glucosyl](n) + ADP-alpha-D-glucose = [(1-&gt;4)-alpha-D-glucosyl](n+1) + ADP + H(+). It functions in the pathway glycan biosynthesis; glycogen biosynthesis. Synthesizes alpha-1,4-glucan chains using ADP-glucose. In Mycoplasma mobile (strain ATCC 43663 / 163K / NCTC 11711) (Mesomycoplasma mobile), this protein is Glycogen synthase.